The primary structure comprises 251 residues: Hydroxypyruvate/pyruvate aldolase (251 aa).

Histidine 44 functions as the Proton acceptor in the catalytic mechanism. Position 69 (arginine 69) interacts with 3-hydroxypyruvate. Glutamate 145 serves as a coordination point for Mg(2+). Residues threonine 170 and aspartate 171 each coordinate 3-hydroxypyruvate. Residue aspartate 171 participates in Mg(2+) binding.

The protein belongs to the HpcH/HpaI aldolase family. As to quaternary structure, homohexamer. Trimer of homodimers. Mn(2+) serves as cofactor. Mg(2+) is required as a cofactor. It depends on Co(2+) as a cofactor. The cofactor is Zn(2+).

It catalyses the reaction D-glyceraldehyde + 3-hydroxypyruvate = 2-dehydro-D-galactonate. It carries out the reaction D-glyceraldehyde + pyruvate = 2-dehydro-3-deoxy-L-galactonate. The catalysed reaction is L-glyceraldehyde + 3-hydroxypyruvate = (3S,4S,5S)-3,4,5,6-tetrahydroxy-2-oxohexanoate. The enzyme catalyses (R)-lactaldehyde + 3-hydroxypyruvate = (3S,4S,5R)-3,4,5-trihydroxy-2-oxohexanoate. It catalyses the reaction (R)-lactaldehyde + 3-hydroxypyruvate = (3S,4R,5R)-3,4,5-trihydroxy-2-oxohexanoate. It carries out the reaction (S)-lactaldehyde + 3-hydroxypyruvate = (3S,4S,5S)-3,4,5-trihydroxy-2-oxohexanoate. The catalysed reaction is D-erythrose + 3-hydroxypyruvate = (3S,4S,5R,6R)-3,4,5,6,7-pentahydroxy-2-oxoheptanoate. Binding of substrate induces a dynamic movement of the metal cofactor between an inactive coordination sphere to a catalytically active one. When oxaloacetate is used as substrate, activity is increased in the presence of micromolar concentrations of inorganic phosphate. The phosphate does not improve the binding of the substrate, but exclusively increases its rate of decarboxylation. Excessive phosphate concentrations negatively affect the reaction rate by removing the metal cofactor. Aldolase which can catalyze in vitro the aldolisation reaction between hydroxypyruvate (HPA) or pyruvate (PA) and D-glyceraldehyde (D-GA). The condensation of hydroxypyruvate and D-glyceraldehyde produces 2-dehydro-D-galactonate as the major product. The condensation of pyruvate and D-glyceraldehyde produces 2-dehydro-3-deoxy-L-galactonate. Can use other electrophilic substrates such as L-glyceraldehyde, D- and L-lactaldehyde and D-erythrose. Also catalyzes the retro-aldol type decarboxylation of oxaloacetate, a general property of known pyruvate aldolases. This chain is Hydroxypyruvate/pyruvate aldolase, found in Rhizorhabdus wittichii (strain DSM 6014 / CCUG 31198 / JCM 15750 / NBRC 105917 / EY 4224 / RW1) (Sphingomonas wittichii).